Reading from the N-terminus, the 255-residue chain is Putative cysteine-rich repeat secretory protein 10 (255 aa).

A signal peptide spans 1-26; that stretch reads MFSSSVSISILVVVAMQFSFIHNVLS. 2 consecutive Gnk2-homologous domains span residues 33–134 and 140–252; these read YLQH…EIYT and FKHY…LYPF.

It belongs to the cysteine-rich repeat secretory protein family.

Its subcellular location is the secreted. The chain is Putative cysteine-rich repeat secretory protein 10 (CRRSP10) from Arabidopsis thaliana (Mouse-ear cress).